A 420-amino-acid polypeptide reads, in one-letter code: Serine hydroxymethyltransferase (420 aa).

Residues L121 and 125-127 (GHL) contribute to the (6S)-5,6,7,8-tetrahydrofolate site. K230 is modified (N6-(pyridoxal phosphate)lysine). (6S)-5,6,7,8-tetrahydrofolate-binding positions include E246 and 354–356 (SPF).

The protein belongs to the SHMT family. In terms of assembly, homodimer. The cofactor is pyridoxal 5'-phosphate.

It localises to the cytoplasm. It carries out the reaction (6R)-5,10-methylene-5,6,7,8-tetrahydrofolate + glycine + H2O = (6S)-5,6,7,8-tetrahydrofolate + L-serine. Its pathway is one-carbon metabolism; tetrahydrofolate interconversion. It participates in amino-acid biosynthesis; glycine biosynthesis; glycine from L-serine: step 1/1. Catalyzes the reversible interconversion of serine and glycine with tetrahydrofolate (THF) serving as the one-carbon carrier. This reaction serves as the major source of one-carbon groups required for the biosynthesis of purines, thymidylate, methionine, and other important biomolecules. Also exhibits THF-independent aldolase activity toward beta-hydroxyamino acids, producing glycine and aldehydes, via a retro-aldol mechanism. The sequence is that of Serine hydroxymethyltransferase from Rickettsia prowazekii (strain Madrid E).